Reading from the N-terminus, the 78-residue chain is D-alanyl carrier protein (78 aa).

The Carrier domain occupies 1–78 (MDFNQEVLSV…QIIKQLNELR (78 aa)). At Ser36 the chain carries O-(pantetheine 4'-phosphoryl)serine.

It belongs to the DltC family. 4'-phosphopantetheine is transferred from CoA to a specific serine of apo-DCP.

Its subcellular location is the cytoplasm. It functions in the pathway cell wall biogenesis; lipoteichoic acid biosynthesis. Functionally, carrier protein involved in the D-alanylation of lipoteichoic acid (LTA). The loading of thioester-linked D-alanine onto DltC is catalyzed by D-alanine--D-alanyl carrier protein ligase DltA. The DltC-carried D-alanyl group is further transferred to cell membrane phosphatidylglycerol (PG) by forming an ester bond, probably catalyzed by DltD. D-alanylation of LTA plays an important role in modulating the properties of the cell wall in Gram-positive bacteria, influencing the net charge of the cell wall. This Bacillus licheniformis (strain ATCC 14580 / DSM 13 / JCM 2505 / CCUG 7422 / NBRC 12200 / NCIMB 9375 / NCTC 10341 / NRRL NRS-1264 / Gibson 46) protein is D-alanyl carrier protein.